The following is a 1363-amino-acid chain: Tonsoku-like protein (1363 aa).

TPR repeat units follow at residues 27-60 (AAYC…LESV), 67-100 (AVAH…AGSL), 107-147 (QRAW…VDEK), 162-195 (TRLY…AEQN), 202-235 (FRAR…ARAM), 242-275 (SECC…GSQK), 311-344 (MAIC…AELL), and 352-385 (AVIH…RKGN). Positions 460 to 511 (SMAKDTEEEEEEEEEEEEEASEAPETSELELSESEDDADGLSQQLEEDEELQ) are disordered. The span at 465 to 510 (TEEEEEEEEEEEEEASEAPETSELELSESEDDADGLSQQLEEDEEL) shows a compositional bias: acidic residues. 3 ANK repeats span residues 528-557 (MGET…PLNP), 561-590 (CGWT…AVDD), and 597-626 (DGIT…SVTL). The interval 662-786 (ERLQMASSGQ…KSRETATSSA (125 aa)) is disordered. Polar residues predominate over residues 666-684 (MASSGQASRSSPALQTIPS). Residues 692–713 (TSPPSSPCPEPSSYTPRPPEAS) show a composition bias toward pro residues. The span at 771–780 (KIPDPPKSRE) shows a compositional bias: basic and acidic residues. An Omega-N-methylarginine modification is found at Arg796. Disordered stretches follow at residues 841-866 (PLTR…RTRV) and 883-909 (AGDG…KENY). The span at 842-853 (LTRSGRPSTSVS) shows a compositional bias: polar residues. 10 LRR repeats span residues 1060 to 1081 (ALRE…ELLA), 1088 to 1108 (NLVL…RQLV), 1119 to 1140 (NLEE…ALAS), 1147 to 1168 (MLST…SHQA), 1179 to 1199 (HLKT…ARVL), 1206 to 1214 (TLKRLDLSS), 1238 to 1261 (ALAH…SRCL), 1266 to 1287 (SLTS…EELL), 1296 to 1317 (GLSF…DLWD), and 1322 to 1343 (QLQE…SVCQ).

This sequence belongs to the Tonsoku family. Component of the MMS22L-TONSL complex, a complex at least composed of MMS22L and TONSL/NFKBIL2. Interacts with the MCM complex, the FACT complex and the RPA complex. Interacts with MCM5; the interaction is direct. Binds histones, with a strong preference for histone H3.1 (histones H3.1 and H3-4/H3.1t). Interacts (via ANK repeats) with histone H4; specifically binds histone H4 lacking methylation at 'Lys-20' (H4K20me0). May interact with DNAJC9; the interaction seems to be histone-dependent.

It is found in the nucleus. It localises to the chromosome. The protein resides in the cytoplasm. In terms of biological role, component of the MMS22L-TONSL complex, a complex that promotes homologous recombination-mediated repair of double-strand breaks (DSBs) at stalled or collapsed replication forks. The MMS22L-TONSL complex is required to maintain genome integrity during DNA replication. It mediates the assembly of RAD51 filaments on single-stranded DNA (ssDNA): the MMS22L-TONSL complex is recruited to DSBs following histone replacement by histone chaperones and eviction of the replication protein A complex (RPA/RP-A) from DSBs. Following recruitment to DSBs, the TONSL-MMS22L complex promotes recruitment of RAD51 filaments and subsequent homologous recombination. Within the complex, TONSL acts as a histone reader, which recognizes and binds newly synthesized histones following their replacement by histone chaperones. Specifically binds histone H4 lacking methylation at 'Lys-20' (H4K20me0) and histone H3.1. The chain is Tonsoku-like protein from Mus musculus (Mouse).